Consider the following 367-residue polypeptide: Cellular tumor antigen p53 (367 aa).

Residues 1-30 (MAEEMEPLLEPTEVFMDLWSMLPYSMQQLP) form a transcription activation (acidic) region. The disordered stretch occupies residues 30–84 (PLPEDHSNWQELSPLEPSDPPPPPPPPPLPLAAAAPPPLNPPTPPRAAPSPVVPS). A compositionally biased stretch (pro residues) spans 46–81 (PSDPPPPPPPPPLPLAAAAPPPLNPPTPPRAAPSPV). A DNA-binding region spans residues 87 to 278 (DYGGDFDFRV…KIEEENFRKR (192 aa)). Zn(2+) is bound by residues C161, H164, C224, and C228. The interaction with DNA stretch occupies residues 259-266 (RVCACPGR). 2 disordered regions span residues 275–303 (FRKRGGAGGVAKRAMSPPTEAPEPPKKRV) and 333–367 (LAEGGSAPRPSKGRRVKVEGPQPSCGKKLLQKGSD). The Bipartite nuclear localization signal motif lies at 286-302 (KRAMSPPTEAPEPPKKR). The oligomerization stretch occupies residues 308-339 (NEIFYLQVRGRRRYEMLKEINEALQLAEGGSA). Positions 322–333 (EMLKEINEALQL) match the Nuclear export signal motif. The tract at residues 347 to 364 (RVKVEGPQPSCGKKLLQK) is basic (repression of DNA-binding).

It belongs to the p53 family. In terms of assembly, binds DNA as a homotetramer. Zn(2+) serves as cofactor.

The protein resides in the cytoplasm. It localises to the nucleus. Multifunctional transcription factor that induces cell cycle arrest, DNA repair or apoptosis upon binding to its target DNA sequence. Acts as a tumor suppressor in many tumor types; induces growth arrest or apoptosis depending on the physiological circumstances and cell type. Negatively regulates cell division by controlling expression of a set of genes required for this process. One of the activated genes is an inhibitor of cyclin-dependent kinases. Apoptosis induction seems to be mediated either by stimulation of BAX and FAS antigen expression, or by repression of Bcl-2 expression. This chain is Cellular tumor antigen p53 (TP53), found in Gallus gallus (Chicken).